The chain runs to 100 residues: Small ribosomal subunit protein uS14c (100 aa).

Belongs to the universal ribosomal protein uS14 family. As to quaternary structure, part of the 30S ribosomal subunit.

Its subcellular location is the plastid. It localises to the chloroplast. Binds 16S rRNA, required for the assembly of 30S particles. This chain is Small ribosomal subunit protein uS14c, found in Mesostigma viride (Green alga).